Here is a 585-residue protein sequence, read N- to C-terminus: Parathyroid hormone/parathyroid hormone-related peptide receptor (585 aa).

The first 26 residues, 1-26 (MGAPRISHSLALLLCCSVLSSVYALV), serve as a signal peptide directing secretion. At 27–185 (DADDVITKEE…REREVFDRLG (159 aa)) the chain is on the extracellular side. Cystine bridges form between C48/C114, C105/C145, and C128/C167. The tract at residues 69–90 (MSRSAKTKKEKPAEKLYSQAEE) is disordered. N-linked (GlcNAc...) asparagine glycosylation is found at N148, N158, N163, and N173. A helical transmembrane segment spans residues 186 to 209 (MIYTVGYSISLGSLTVAVLILGYF). Topologically, residues 210-216 (RRLHCTR) are cytoplasmic. Residues 217–236 (NYIHMHLFVSFMLRAVSIFI) form a helical membrane-spanning segment. Over 237 to 276 (KDAVLYSGVSTDEIERITEEELRAFTEPPPADKAGFVGCR) the chain is Extracellular. A helical membrane pass occupies residues 277 to 300 (VAVTVFLYFLTTNYYWILVEGLYL). The Cytoplasmic portion of the chain corresponds to 301-314 (HSLIFMAFFSEKKY). Residues 315-336 (LWGFTLFGWGLPAVFVAVWVTV) form a helical membrane-spanning segment. Residues 337–355 (RATLANTECWDLSSGNKKW) lie on the Extracellular side of the membrane. A helical transmembrane segment spans residues 356-376 (IIQVPILAAIVVNFILFINII). Topologically, residues 377-403 (RVLATKLRETNAGRCDTRQQYRKLLKS) are cytoplasmic. A helical membrane pass occupies residues 404-422 (TLVLMPLFGVHYIVFMATP). Residues 423 to 434 (YTEVSGILWQVQ) are Extracellular-facing. The helical transmembrane segment at 435-457 (MHYEMLFNSFQGFFVAIIYCFCN) threads the bilayer. Residues 458-585 (GEVQAEIKKS…LLEEERETVM (128 aa)) are Cytoplasmic-facing. Positions 468–471 (WSRW) match the Important for interaction with G proteins motif. Residues 531 to 585 (PGYVKHGSISENSLPSSGPEPGTKDDGYLNGSGLYEPMVGEQPPPLLEEERETVM) form a disordered region.

Belongs to the G-protein coupled receptor 2 family. As to quaternary structure, homodimer in the absence of bound ligand. Peptide hormone binding leads to dissociation of the homodimer. Post-translationally, N-glycosylated.

The protein localises to the cell membrane. Its function is as follows. G-protein-coupled receptor for parathyroid hormone (PTH) and for parathyroid hormone-related peptide (PTHLH). Ligand binding causes a conformation change that triggers signaling via guanine nucleotide-binding proteins (G proteins) and modulates the activity of downstream effectors, such as adenylate cyclase (cAMP). PTH1R is coupled to G(s) G alpha proteins and mediates activation of adenylate cyclase activity. PTHLH dissociates from PTH1R more rapidly than PTH; as consequence, the cAMP response induced by PTHLH decays faster than the response induced by PTH. In Didelphis virginiana (North American opossum), this protein is Parathyroid hormone/parathyroid hormone-related peptide receptor (PTH1R).